Consider the following 396-residue polypeptide: CCA-adding enzyme (396 aa).

ATP contacts are provided by Gly-27 and Arg-30. CTP is bound by residues Gly-27 and Arg-30. The Mg(2+) site is built by Asp-40 and Asp-42. ATP is bound by residues Arg-111, Asp-154, Arg-157, Arg-160, and Arg-163. 5 residues coordinate CTP: Arg-111, Asp-154, Arg-157, Arg-160, and Arg-163.

The protein belongs to the tRNA nucleotidyltransferase/poly(A) polymerase family. Bacterial CCA-adding enzyme type 3 subfamily. In terms of assembly, homodimer. It depends on Mg(2+) as a cofactor.

The catalysed reaction is a tRNA precursor + 2 CTP + ATP = a tRNA with a 3' CCA end + 3 diphosphate. It carries out the reaction a tRNA with a 3' CCA end + 2 CTP + ATP = a tRNA with a 3' CCACCA end + 3 diphosphate. In terms of biological role, catalyzes the addition and repair of the essential 3'-terminal CCA sequence in tRNAs without using a nucleic acid template. Adds these three nucleotides in the order of C, C, and A to the tRNA nucleotide-73, using CTP and ATP as substrates and producing inorganic pyrophosphate. tRNA 3'-terminal CCA addition is required both for tRNA processing and repair. Also involved in tRNA surveillance by mediating tandem CCA addition to generate a CCACCA at the 3' terminus of unstable tRNAs. While stable tRNAs receive only 3'-terminal CCA, unstable tRNAs are marked with CCACCA and rapidly degraded. The chain is CCA-adding enzyme from Bacillus velezensis (strain DSM 23117 / BGSC 10A6 / LMG 26770 / FZB42) (Bacillus amyloliquefaciens subsp. plantarum).